The primary structure comprises 422 residues: Lactose-binding protein (422 aa).

Positions 1–28 (MDYSRLLKRSVSAALTAAALLCSTAAFA) are cleaved as a signal peptide. The lactose-binding stretch occupies residues 246–277 (SNDGIRALTSGDVASVLRGVWITGTVKSQPDQ).

The protein belongs to the bacterial solute-binding protein 1 family.

The protein resides in the periplasm. Functionally, part of the binding-protein-dependent transport system for lactose. This Rhizobium radiobacter (Agrobacterium tumefaciens) protein is Lactose-binding protein (lacE).